Consider the following 185-residue polypeptide: V-type ATP synthase subunit E (185 aa).

This sequence belongs to the V-ATPase E subunit family.

In terms of biological role, produces ATP from ADP in the presence of a proton gradient across the membrane. The protein is V-type ATP synthase subunit E of Deinococcus geothermalis (strain DSM 11300 / CIP 105573 / AG-3a).